We begin with the raw amino-acid sequence, 149 residues long: Large ribosomal subunit protein bL9 (149 aa).

The protein belongs to the bacterial ribosomal protein bL9 family.

Binds to the 23S rRNA. The protein is Large ribosomal subunit protein bL9 of Haemophilus influenzae (strain PittEE).